The primary structure comprises 316 residues: Bifunctional peptidase and (3S)-lysyl hydroxylase JMJD7 (316 aa).

Cysteine 19 carries the cysteine sulfenic acid (-SOH) modification. Residues tyrosine 123 and threonine 172 each coordinate 2-oxoglutarate. Tyrosine 123 is a succinate binding site. Positions 124–310 constitute a JmjC domain; sequence IQKQNSNLSV…YCYYRMLEQM (187 aa). Residues histidine 175 and aspartate 177 each coordinate Fe cation. The 2-oxoglutarate site is built by asparagine 181, tyrosine 183, and lysine 190. Residues tyrosine 183 and lysine 190 each contribute to the succinate site. Histidine 278 contributes to the Fe cation binding site. Position 292 (tryptophan 292) interacts with 2-oxoglutarate.

Homodimer; disulfide-linked. Fe(2+) serves as cofactor. As to expression, expressed in the pars intercerebralis and fan-shaped body, regions known to be involved in sleep.

It localises to the nucleus. Its subcellular location is the cytoplasm. It catalyses the reaction L-lysyl-[protein] + 2-oxoglutarate + O2 = (3S)-3-hydroxy-L-lysyl-[protein] + succinate + CO2. Functionally, bifunctional enzyme that acts both as an endopeptidase and 2-oxoglutarate-dependent monooxygenase. Endopeptidase that cleaves histones N-terminal tails at the carboxyl side of methylated arginine or lysine residues, to generate 'tailless nucleosomes', which may trigger transcription elongation. Hydroxylates the guanylate binding protein 128up. May be involved in regulation of behavior and circadian rhythms. The polypeptide is Bifunctional peptidase and (3S)-lysyl hydroxylase JMJD7 (Drosophila melanogaster (Fruit fly)).